The primary structure comprises 120 residues: Ubiquitin domain-containing protein TINCR (120 aa).

The 70-residue stretch at 14 to 83 (YHIKVHLADE…LQDGSVLLLV (70 aa)) folds into the Ubiquitin-like domain.

As to expression, detected in stratum corneum (at protein level).

The protein is Ubiquitin domain-containing protein TINCR of Homo sapiens (Human).